Here is a 123-residue protein sequence, read N- to C-terminus: uncharacterized protein (123 aa).

The disordered stretch occupies residues 89–123 (GVGGRKLGSEGQSLSENSEQRSLMRWGCGGSSERR). Residues 98-109 (EGQSLSENSEQR) show a composition bias toward polar residues.

This is an uncharacterized protein from Encephalitozoon cuniculi (strain GB-M1) (Microsporidian parasite).